The sequence spans 145 residues: Bacilliredoxin BrxB (145 aa).

Catalysis depends on nucleophile residues Cys-52 and Cys-54. An S-bacillithiol cysteine disulfide modification is found at Cys-52. The short motif at 52–54 is the CXC active site motif element; that stretch reads CGC. The cysteines at positions 52 and 54 are disulfide-linked.

This sequence belongs to the bacilliredoxin family. In terms of assembly, interacts with BrxC. In terms of processing, N-terminal Cys of the CXC active site motif can react with bacillithiol (BSH) to form mixed disulfides. S-bacillithiolation protects Cys residues against overoxidation by acting as a redox switch in response to oxidative stress.

In terms of biological role, S-bacillithiolation is the formation of mixed disulfide bonds between protein thiols and the general thiol reductant bacillithiol (BSH) under oxidative stress. BSH is an equivalent of glutathione (GSH) in Firmicutes. This protein is a dithiol bacilliredoxin, which debacillithiolates (removes BSH) the S-bacillithiolated OhrR (OhrR-SSB) in vitro and in vivo NaOCl-generated S-bacillithiolated MetE (MetE-SSB). Involved in maintaining redox homeostasis in response to disulfide stress conditions. This chain is Bacilliredoxin BrxB, found in Bacillus subtilis (strain 168).